Here is a 109-residue protein sequence, read N- to C-terminus: Nucleoid-associated protein BUsg_467 (109 aa).

This sequence belongs to the YbaB/EbfC family. Homodimer.

It is found in the cytoplasm. It localises to the nucleoid. Its function is as follows. Binds to DNA and alters its conformation. May be involved in regulation of gene expression, nucleoid organization and DNA protection. The polypeptide is Nucleoid-associated protein BUsg_467 (Buchnera aphidicola subsp. Schizaphis graminum (strain Sg)).